Consider the following 161-residue polypeptide: 3-isopropylmalate dehydratase small subunit (161 aa).

The protein belongs to the LeuD family. LeuD type 2 subfamily. As to quaternary structure, heterodimer of LeuC and LeuD.

The enzyme catalyses (2R,3S)-3-isopropylmalate = (2S)-2-isopropylmalate. It functions in the pathway amino-acid biosynthesis; L-leucine biosynthesis; L-leucine from 3-methyl-2-oxobutanoate: step 2/4. Functionally, catalyzes the isomerization between 2-isopropylmalate and 3-isopropylmalate, via the formation of 2-isopropylmaleate. This chain is 3-isopropylmalate dehydratase small subunit, found in Sulfolobus acidocaldarius (strain ATCC 33909 / DSM 639 / JCM 8929 / NBRC 15157 / NCIMB 11770).